Consider the following 268-residue polypeptide: 4-hydroxy-tetrahydrodipicolinate reductase (268 aa).

NAD(+) contacts are provided by residues 9 to 14 (GVCGRM), Glu-35, 99 to 101 (GTT), and 123 to 126 (APNY). His-156 functions as the Proton donor/acceptor in the catalytic mechanism. A (S)-2,3,4,5-tetrahydrodipicolinate-binding site is contributed by His-157. The active-site Proton donor is the Lys-160. Position 166-167 (166-167 (GT)) interacts with (S)-2,3,4,5-tetrahydrodipicolinate.

The protein belongs to the DapB family.

The protein resides in the cytoplasm. The enzyme catalyses (S)-2,3,4,5-tetrahydrodipicolinate + NAD(+) + H2O = (2S,4S)-4-hydroxy-2,3,4,5-tetrahydrodipicolinate + NADH + H(+). It catalyses the reaction (S)-2,3,4,5-tetrahydrodipicolinate + NADP(+) + H2O = (2S,4S)-4-hydroxy-2,3,4,5-tetrahydrodipicolinate + NADPH + H(+). The protein operates within amino-acid biosynthesis; L-lysine biosynthesis via DAP pathway; (S)-tetrahydrodipicolinate from L-aspartate: step 4/4. In terms of biological role, catalyzes the conversion of 4-hydroxy-tetrahydrodipicolinate (HTPA) to tetrahydrodipicolinate. This Magnetococcus marinus (strain ATCC BAA-1437 / JCM 17883 / MC-1) protein is 4-hydroxy-tetrahydrodipicolinate reductase.